Here is a 443-residue protein sequence, read N- to C-terminus: Tubulin beta-3 chain (443 aa).

8 residues coordinate GTP: Gln-11, Glu-69, Ser-138, Gly-142, Thr-143, Gly-144, Asn-204, and Asn-226. Glu-69 contributes to the Mg(2+) binding site.

Belongs to the tubulin family. In terms of assembly, dimer of alpha and beta chains. A typical microtubule is a hollow water-filled tube with an outer diameter of 25 nm and an inner diameter of 15 nM. Alpha-beta heterodimers associate head-to-tail to form protofilaments running lengthwise along the microtubule wall with the beta-tubulin subunit facing the microtubule plus end conferring a structural polarity. Microtubules usually have 13 protofilaments but different protofilament numbers can be found in some organisms and specialized cells. Requires Mg(2+) as cofactor.

The protein localises to the cytoplasm. Its subcellular location is the cytoskeleton. Its function is as follows. Tubulin is the major constituent of microtubules, a cylinder consisting of laterally associated linear protofilaments composed of alpha- and beta-tubulin heterodimers. Microtubules grow by the addition of GTP-tubulin dimers to the microtubule end, where a stabilizing cap forms. Below the cap, tubulin dimers are in GDP-bound state, owing to GTPase activity of alpha-tubulin. The sequence is that of Tubulin beta-3 chain (TUB-3) from Echinococcus multilocularis (Fox tapeworm).